Reading from the N-terminus, the 360-residue chain is Probable cinnamyl alcohol dehydrogenase 9 (360 aa).

Cys-50 is a binding site for Zn(2+). Thr-52 is a binding site for NADP(+). Positions 72, 73, 103, 106, 109, 117, and 166 each coordinate Zn(2+). NADP(+)-binding positions include Thr-170, 191-196 (GLGGLG), 214-219 (SSSSTK), Thr-254, Gly-278, and 301-303 (SDV).

It belongs to the zinc-containing alcohol dehydrogenase family. Homodimer. Zn(2+) is required as a cofactor. In terms of tissue distribution, expressed in the vasculature of the primary root and elongation regions. Expressed in the hypocotyl, cotyledon veins, vasculature of the first rosette leaves, and hydathodes. In stems, expressed in the vascular cambium, interfascicular cambium, developing xylem, and phloem. Expressed in the entire floral organs at late developing stage, and in the abscission, style and stigmatic regions of siliques and seed funicules.

It carries out the reaction (E)-cinnamyl alcohol + NADP(+) = (E)-cinnamaldehyde + NADPH + H(+). Its pathway is aromatic compound metabolism; phenylpropanoid biosynthesis. Its function is as follows. Involved in lignin biosynthesis. May catalyze the final step specific for the production of lignin monomers, like coniferyl alcohol, sinapyl alcohol and 4-coumaryl alcohol. The chain is Probable cinnamyl alcohol dehydrogenase 9 (CAD9) from Arabidopsis thaliana (Mouse-ear cress).